The sequence spans 371 residues: tRNA-specific 2-thiouridylase MnmA (371 aa).

Residues 13 to 20 (GMSGGVDS) and Met-39 contribute to the ATP site. Positions 99–101 (NPD) are interaction with target base in tRNA. Cys-104 functions as the Nucleophile in the catalytic mechanism. A disulfide bridge connects residues Cys-104 and Cys-200. Position 128 (Gly-128) interacts with ATP. The tract at residues 150–152 (KDQ) is interaction with tRNA. Catalysis depends on Cys-200, which acts as the Cysteine persulfide intermediate. Residues 308–309 (RY) are interaction with tRNA.

It belongs to the MnmA/TRMU family.

It is found in the cytoplasm. The enzyme catalyses S-sulfanyl-L-cysteinyl-[protein] + uridine(34) in tRNA + AH2 + ATP = 2-thiouridine(34) in tRNA + L-cysteinyl-[protein] + A + AMP + diphosphate + H(+). Catalyzes the 2-thiolation of uridine at the wobble position (U34) of tRNA, leading to the formation of s(2)U34. The protein is tRNA-specific 2-thiouridylase MnmA of Listeria monocytogenes serotype 4b (strain CLIP80459).